The sequence spans 139 residues: Peptide methionine sulfoxide reductase MsrB (139 aa).

The MsrB domain maps to 8–130 (DQEWRQQLTD…NSASLRFHSA (123 aa)). 4 residues coordinate Zn(2+): cysteine 47, cysteine 50, cysteine 96, and cysteine 99. The active-site Nucleophile is cysteine 119.

It belongs to the MsrB Met sulfoxide reductase family. Requires Zn(2+) as cofactor.

It carries out the reaction L-methionyl-[protein] + [thioredoxin]-disulfide + H2O = L-methionyl-(R)-S-oxide-[protein] + [thioredoxin]-dithiol. The polypeptide is Peptide methionine sulfoxide reductase MsrB (Hahella chejuensis (strain KCTC 2396)).